Reading from the N-terminus, the 643-residue chain is uncharacterized protein (643 aa).

A disordered region spans residues 561-643 (LNQELETSSE…GADRKKRGVY (83 aa)). Positions 591 to 606 (SRGGRGGRGARGGNRG) are enriched in gly residues. The segment covering 617 to 635 (GHDRQMKEKHKSDIKQRGA) has biased composition (basic and acidic residues).

This is an uncharacterized protein from Caenorhabditis elegans.